A 138-amino-acid chain; its full sequence is MRITQGTFSFLPDLTDEQIKKQIDYMISKKLAIGIEYTNDIHPRNSFWEMWGLPLFEVTDPAPVLFEINACRKAKSNFYIKVVGFSSERGIESTIISFIVNRPKHEPGFNLIRQEDKSRSIKYSIQAYETYKPEDQRY.

This sequence belongs to the RuBisCO small chain family. As to quaternary structure, heterohexadecamer of 8 large and 8 small subunits.

The protein localises to the plastid. The protein resides in the chloroplast. Its function is as follows. RuBisCO catalyzes two reactions: the carboxylation of D-ribulose 1,5-bisphosphate, the primary event in carbon dioxide fixation, as well as the oxidative fragmentation of the pentose substrate in the photorespiration process. Both reactions occur simultaneously and in competition at the same active site. Although the small subunit is not catalytic it is essential for maximal activity. Carbon dioxide and oxygen bind in the same pocket of the enzyme in a similar manner. The chain is Ribulose bisphosphate carboxylase small subunit from Galdieria sulphuraria (Red alga).